The sequence spans 550 residues: Aldehyde dehydrogenase family 3 member I1, chloroplastic (550 aa).

Residues 1 to 59 constitute a chloroplast transit peptide; that stretch reads MTKLLEINHIQTLCFAKGFSPARLNVATSPFRISRRGGGGYCSNACIPYRLKFTCYATL. 259–264 is an NAD(+) binding site; that stretch reads GGARVA. Glu-281 serves as the catalytic Proton acceptor. The active-site Nucleophile is the Cys-316.

Belongs to the aldehyde dehydrogenase family. In terms of assembly, homodimer and homomultimer.

It localises to the plastid. The protein localises to the chloroplast. The catalysed reaction is an aldehyde + NAD(+) + H2O = a carboxylate + NADH + 2 H(+). With respect to regulation, thiol-based regulation. Inactivation after dimerization under oxidizing conditions. Functionally, involved in oxidative stress tolerance by detoxifying reactive aldehydes derived from lipid peroxidation. Medium- to long-chain saturated aldehydes are preferred substrates, while the short-chain aldehyde propanal is a weak substrate. Can use both NAD(+) and NADP(+), but the coenzyme preference is substrate dependent. The protein is Aldehyde dehydrogenase family 3 member I1, chloroplastic (ALDH3I1) of Arabidopsis thaliana (Mouse-ear cress).